The following is a 179-amino-acid chain: MASSATMLSSVATAACVAPAQASMVAPFVGLKSASAFPVTQKTVTGLSTLPSNGGRVQCMKVWPIVGLKKFETLSYLPTLSVESLLKQIEYLIRNGWVPCLEFSLEGFVSRDNNKSPGYYDGRYWTMWKLPMFGCTDAAQVVKEAAECKKEYPAAFIRVIGFDNVRQVQCVSFIVEKPE.

The N-terminal 58 residues, 1–58 (MASSATMLSSVATAACVAPAQASMVAPFVGLKSASAFPVTQKTVTGLSTLPSNGGRVQ), are a transit peptide targeting the chloroplast.

This sequence belongs to the RuBisCO small chain family. As to quaternary structure, heterohexadecamer of 8 large and 8 small subunits.

It is found in the plastid. It localises to the chloroplast. Its function is as follows. RuBisCO catalyzes two reactions: the carboxylation of D-ribulose 1,5-bisphosphate, the primary event in carbon dioxide fixation, as well as the oxidative fragmentation of the pentose substrate. Both reactions occur simultaneously and in competition at the same active site. Although the small subunit is not catalytic it is essential for maximal activity. The polypeptide is Ribulose bisphosphate carboxylase small subunit, chloroplastic 2 (Fritillaria agrestis (Stinkbells)).